Reading from the N-terminus, the 91-residue chain is Small ribosomal subunit protein uS19 (91 aa).

Belongs to the universal ribosomal protein uS19 family.

Protein S19 forms a complex with S13 that binds strongly to the 16S ribosomal RNA. In Amoebophilus asiaticus (strain 5a2), this protein is Small ribosomal subunit protein uS19.